The chain runs to 913 residues: Ubiquitin carboxyl-terminal hydrolase 20 (913 aa).

The UBP-type zinc finger occupies 6 to 111 (DLCPHLDSIG…GSSKFSEQDS (106 aa)). Zn(2+) contacts are provided by C8, H10, C30, C33, C43, C48, C53, H60, H64, H70, C83, and C86. Phosphoserine occurs at positions 111, 131, and 133. The USP domain occupies 144 to 684 (TGMKNLGNSC…EGYVLFYRKS (541 aa)). C153 acts as the Nucleophile in catalysis. A disordered region spans residues 256 to 414 (LTEARDSDSS…SSSPPRASPV (159 aa)). Phosphothreonine is present on T257. A compositionally biased stretch (basic and acidic residues) spans 258–278 (EARDSDSSDTDEKREGDRSPS). Position 304 is a phosphoserine (S304). Positions 315-331 (EASRAISEKERMKDRKF) are enriched in basic and acidic residues. S367 carries the post-translational modification Phosphoserine. T376 carries the phosphothreonine modification. Phosphoserine occurs at positions 407 and 412. H642 serves as the catalytic Proton acceptor. 2 DUSP domains span residues 686–779 (EEAV…LYVC) and 788–891 (ALAK…RQSV).

Belongs to the peptidase C19 family. USP20/USP33 subfamily. As to quaternary structure, interacts with VHL, leading to its ubiquitination and subsequent degradation. Interacts with CCP110. Interacts with DIO2. Interacts with HIF1A. Interacts with ADRB2. Interacts with USP18. In terms of processing, ubiquitinated via a VHL-dependent pathway for proteasomal degradation.

The protein resides in the cytoplasm. The protein localises to the endoplasmic reticulum. Its subcellular location is the perinuclear region. It is found in the cytoskeleton. It localises to the microtubule organizing center. The protein resides in the centrosome. It catalyses the reaction Thiol-dependent hydrolysis of ester, thioester, amide, peptide and isopeptide bonds formed by the C-terminal Gly of ubiquitin (a 76-residue protein attached to proteins as an intracellular targeting signal).. Deubiquitinating enzyme that plays a role in many cellular processes including autophagy, cellular antiviral response or membrane protein biogenesis. Attenuates TLR4-mediated NF-kappa-B signaling by cooperating with beta-arrestin-2/ARRB2 and inhibiting TRAF6 autoubiquitination. Promotes cellular antiviral responses by deconjugating 'Lys-33' and 'Lys-48'-linked ubiquitination of STING1 leading to its stabilization. Plays an essential role in autophagy induction by regulating the ULK1 stability through deubiquitination of ULK1. Acts as a positive regulator for NF-kappa-B activation by TNF-alpha through deubiquitinating 'Lys-48'-linked polyubiquitination of SQSTM1, leading to its increased stability. Acts as a regulator of G-protein coupled receptor (GPCR) signaling by mediating the deubiquitination beta-2 adrenergic receptor (ADRB2). Plays a central role in ADRB2 recycling and resensitization after prolonged agonist stimulation by constitutively binding ADRB2, mediating deubiquitination of ADRB2 and inhibiting lysosomal trafficking of ADRB2. Upon dissociation, it is probably transferred to the translocated beta-arrestins, possibly leading to beta-arrestins deubiquitination and disengagement from ADRB2. This suggests the existence of a dynamic exchange between the ADRB2 and beta-arrestins. Deubiquitinates DIO2, thereby regulating thyroid hormone regulation. Deubiquitinates HIF1A, leading to stabilize HIF1A and enhance HIF1A-mediated activity. Deubiquitinates MCL1, a pivotal member of the anti-apoptotic Bcl-2 protein family to regulate its stability. Within the endoplasmic reticulum, participates with USP33 in the rescue of post-translationally targeted membrane proteins that are inappropriately ubiquitinated by the cytosolic protein quality control in the cytosol. This chain is Ubiquitin carboxyl-terminal hydrolase 20 (USP20), found in Pongo abelii (Sumatran orangutan).